The primary structure comprises 205 residues: Pyrrolidone-carboxylate peptidase (205 aa).

Residues Glu-79, Cys-142, and His-165 contribute to the active site.

Belongs to the peptidase C15 family. As to quaternary structure, homotetramer.

The protein resides in the cytoplasm. It carries out the reaction Release of an N-terminal pyroglutamyl group from a polypeptide, the second amino acid generally not being Pro.. Functionally, removes 5-oxoproline from various penultimate amino acid residues except L-proline. The sequence is that of Pyrrolidone-carboxylate peptidase from Gloeobacter violaceus (strain ATCC 29082 / PCC 7421).